Here is a 322-residue protein sequence, read N- to C-terminus: Stage V sporulation protein K (322 aa).

99 to 106 (GNPGTGKT) lines the ATP pocket.

This sequence belongs to the CbxX/CfxQ family.

The sequence is that of Stage V sporulation protein K (spoVK) from Bacillus subtilis (strain 168).